Consider the following 1699-residue polypeptide: Cilia- and flagella-associated protein 61 (1699 aa).

Over residues 1-22 (MYSNNQLDNPNHSRSQYRNGDQ) the composition is skewed to polar residues. Disordered regions lie at residues 1-23 (MYSN…GDQS), 489-515 (QLKR…DEFK), and 1340-1365 (ERDA…EENQ). Residues 489–503 (QLKRPQKKVTKRPKR) are compositionally biased toward basic residues. 2 stretches are compositionally biased toward basic and acidic residues: residues 504–515 (QKEEDKKEDEFK) and 1340–1359 (ERDA…QSRD).

The protein localises to the cell projection. It is found in the cilium. In terms of biological role, as component of a spoke-associated complex, regulates ciliary mobility by mediating a stable and functional assembly of the radial spoke 3 (RS3). This Tetrahymena thermophila (strain SB210) protein is Cilia- and flagella-associated protein 61.